The sequence spans 521 residues: Probable methylmalonate-semialdehyde/malonate-semialdehyde dehydrogenase [acylating], mitochondrial (521 aa).

The NAD(+) site is built by Phe-172, Lys-196, Glu-199, Arg-200, and Ser-249. Residue Cys-304 is the Nucleophile of the active site. Glu-404 contributes to the NAD(+) binding site.

The protein belongs to the aldehyde dehydrogenase family. In terms of assembly, homotetramer.

It localises to the mitochondrion. The catalysed reaction is 2-methyl-3-oxopropanoate + NAD(+) + CoA + H2O = propanoyl-CoA + hydrogencarbonate + NADH + H(+). It catalyses the reaction 3-oxopropanoate + NAD(+) + CoA + H2O = hydrogencarbonate + acetyl-CoA + NADH + H(+). Functionally, probable malonate and methylmalonate semialdehyde dehydrogenase involved in the catabolism of valine, thymine, and compounds catabolized by way of beta-alanine, including uracil and cytidine. The sequence is that of Probable methylmalonate-semialdehyde/malonate-semialdehyde dehydrogenase [acylating], mitochondrial from Aedes aegypti (Yellowfever mosquito).